Reading from the N-terminus, the 407-residue chain is 12S rRNA N(4)-cytidine methyltransferase METTL15 (407 aa).

Residues 100-102, Asp119, Phe146, Asp169, and Gln176 each bind S-adenosyl-L-methionine; that span reads GGH. Phosphoserine is present on Ser358.

Belongs to the methyltransferase superfamily. RsmH family.

Its subcellular location is the mitochondrion matrix. The enzyme catalyses cytidine(839) in 12S rRNA + S-adenosyl-L-methionine = N(4)-methylcytidine(839) in 12S rRNA + S-adenosyl-L-homocysteine + H(+). Functionally, N4-methylcytidine (m4C) methyltransferase responsible for the methylation of position C839 in mitochondrial 12S rRNA. Involved in the stabilization of 12S rRNA folding, therefore facilitating the assembly of the mitochondrial small ribosomal subunits. In Pongo abelii (Sumatran orangutan), this protein is 12S rRNA N(4)-cytidine methyltransferase METTL15 (METTL15).